The following is a 215-amino-acid chain: Dual specificity phosphatase 29 (215 aa).

The region spanning His-53–Lys-201 is the Tyrosine-protein phosphatase domain. Residue His-145–Arg-152 coordinates substrate. The Phosphocysteine intermediate role is filled by Cys-146.

It belongs to the protein-tyrosine phosphatase family. Non-receptor class dual specificity subfamily. In terms of assembly, homodimer. Interacts with PRKAA2.

The protein localises to the cytoplasm. Its subcellular location is the nucleus. It carries out the reaction O-phospho-L-tyrosyl-[protein] + H2O = L-tyrosyl-[protein] + phosphate. It catalyses the reaction O-phospho-L-seryl-[protein] + H2O = L-seryl-[protein] + phosphate. The enzyme catalyses O-phospho-L-threonyl-[protein] + H2O = L-threonyl-[protein] + phosphate. Its function is as follows. Dual specificity phosphatase able to dephosphorylate phosphotyrosine, phosphoserine and phosphothreonine residues within the same substrate, with a preference for phosphotyrosine as a substrate. Involved in the modulation of intracellular signaling cascades. In skeletal muscle regulates systemic glucose homeostasis by activating, AMPK, an energy sensor protein kinase. Affects MAP kinase signaling though modulation of the MAPK1/2 cascade in skeletal muscle promoting muscle cell differentiation, development and atrophy. This is Dual specificity phosphatase 29 (Dusp29) from Rattus norvegicus (Rat).